Here is a 529-residue protein sequence, read N- to C-terminus: MQNAVIYQPVQIEYLKKTSDLFSEQQLADSFVLIFHLKGNGYISIGTNTNPLQKKTLYVCPPNETFGFTPAADGHIDACIIRLLSYIKETGQDIFTPCTESELAKLKLMNVSHIENLAVRLQELAALWNESSQLSQLKCVIEVQSLIYDLFTASLSDQTDTHSAIEKTKHYIETHADTKITLAQLSQMAGISAKHYSESFKKWTGQSVTEFITKTRITKAKRLMAKSNCKLKEIAHQTGYQDEFYFSRIFKKYTGCSPTSYMKKRRKKIAAYGRGTMGHLIPLHHIPFAAALHPKWTSYYYQHYSTDIPVQLSAYRFNEKWEENLYTLSQAEPDVIVSMDSISPEEQDRLNRIAEVMYLPSEESWRTHFLQTASFLKEESEAEKWLADYDQQTTAAKKTLQHVQGLRFLFLRLHKQNFYLAHNRSVREVFFGDLGFSSATTADTPSEQAISLENIANYQADCMMLFLFKEPETIAYYQQLQQTEAWQNLSAVRDNRVYLLSLDPWNEYSACGHERIVQQTVSLLSGDCP.

Residues 182–201 (LAQLSQMAGISAKHYSESFK) constitute a DNA-binding region (H-T-H motif). Residues 268-528 (KIAAYGRGTM…QTVSLLSGDC (261 aa)) form the Fe/B12 periplasmic-binding domain.

Binds with high affinity to both apo-bacillibactin and iron-bacillibactin.

The protein localises to the cytoplasm. Its function is as follows. In iron-limited conditions, activates expression of the feuABCybbA operon, which encodes the bacillibactin uptake system. Acts by binding directly to a conserved direct repeat element upstream of the feuA promoter. Activity is increased in the presence of bacillibactin. The polypeptide is HTH-type transcriptional activator Btr (btr) (Bacillus subtilis (strain 168)).